The chain runs to 456 residues: Phosphomethylpyrimidine synthase (456 aa).

Substrate is bound by residues Asn-80, Met-109, Tyr-139, His-175, 195–197, 236–239, and Glu-275; these read SRG and DSLR. Zn(2+) is bound at residue His-279. Residue Tyr-302 coordinates substrate. His-343 provides a ligand contact to Zn(2+). 3 residues coordinate [4Fe-4S] cluster: Cys-423, Cys-426, and Cys-431.

It belongs to the ThiC family. Requires [4Fe-4S] cluster as cofactor.

The catalysed reaction is 5-amino-1-(5-phospho-beta-D-ribosyl)imidazole + S-adenosyl-L-methionine = 4-amino-2-methyl-5-(phosphooxymethyl)pyrimidine + CO + 5'-deoxyadenosine + formate + L-methionine + 3 H(+). It participates in cofactor biosynthesis; thiamine diphosphate biosynthesis. Catalyzes the synthesis of the hydroxymethylpyrimidine phosphate (HMP-P) moiety of thiamine from aminoimidazole ribotide (AIR) in a radical S-adenosyl-L-methionine (SAM)-dependent reaction. The protein is Phosphomethylpyrimidine synthase of Prochlorococcus marinus (strain MIT 9515).